A 202-amino-acid chain; its full sequence is Peptidyl-tRNA hydrolase (202 aa).

Tyr-14 is a tRNA binding site. His-19 serves as the catalytic Proton acceptor. Residues Tyr-64, Asn-66, and Asn-112 each contribute to the tRNA site.

This sequence belongs to the PTH family. As to quaternary structure, monomer.

It localises to the cytoplasm. It carries out the reaction an N-acyl-L-alpha-aminoacyl-tRNA + H2O = an N-acyl-L-amino acid + a tRNA + H(+). Hydrolyzes ribosome-free peptidyl-tRNAs (with 1 or more amino acids incorporated), which drop off the ribosome during protein synthesis, or as a result of ribosome stalling. Its function is as follows. Catalyzes the release of premature peptidyl moieties from peptidyl-tRNA molecules trapped in stalled 50S ribosomal subunits, and thus maintains levels of free tRNAs and 50S ribosomes. This is Peptidyl-tRNA hydrolase from Nitrobacter winogradskyi (strain ATCC 25391 / DSM 10237 / CIP 104748 / NCIMB 11846 / Nb-255).